The chain runs to 138 residues: Nucleoside diphosphate kinase (138 aa).

K9, F57, R85, T91, R102, and N112 together coordinate ATP. The active-site Pros-phosphohistidine intermediate is H115.

Belongs to the NDK family. In terms of assembly, homotetramer. The cofactor is Mg(2+).

It localises to the cytoplasm. It carries out the reaction a 2'-deoxyribonucleoside 5'-diphosphate + ATP = a 2'-deoxyribonucleoside 5'-triphosphate + ADP. The catalysed reaction is a ribonucleoside 5'-diphosphate + ATP = a ribonucleoside 5'-triphosphate + ADP. Functionally, major role in the synthesis of nucleoside triphosphates other than ATP. The ATP gamma phosphate is transferred to the NDP beta phosphate via a ping-pong mechanism, using a phosphorylated active-site intermediate. This Deinococcus deserti (strain DSM 17065 / CIP 109153 / LMG 22923 / VCD115) protein is Nucleoside diphosphate kinase.